A 541-amino-acid chain; its full sequence is Pseudokinase FAM20A (541 aa).

The N-terminal stretch at 1-33 (MPGLRRDRLLALLLLGALFSADLYFHLWPQVQR) is a signal peptide. N-linked (GlcNAc...) asparagine glycosylation is found at Asn-70, Asn-145, and Asn-287. Cystine bridges form between Cys-314-Cys-330, Cys-319-Cys-323, Cys-378-Cys-452, and Cys-453-Cys-512. The N-linked (GlcNAc...) asparagine glycan is linked to Asn-388. Asn-538 carries N-linked (GlcNAc...) asparagine glycosylation.

The protein belongs to the FAM20 family. Interacts with FAM20C; probably forming a heterotetramer of 2 subunits of FAM20A and 2 subunits of FAM20C. In terms of processing, N-glycosylated. As to expression, in the mammary gland, expressed at higher levels in lactating mice than in virgin mice. Observed throughout the tissues of the mandibular incisor, including the secretory and maturation stage ameloblasts, the suprabasal layers of the gingival epithelium and the odontoblasts. Weak expression in the enamel matrix.

The protein localises to the secreted. Its subcellular location is the golgi apparatus. The protein resides in the endoplasmic reticulum. In terms of biological role, pseudokinase that acts as an allosteric activator of the Golgi serine/threonine protein kinase FAM20C and is involved in biomineralization of teeth. Forms a complex with FAM20C and increases the ability of FAM20C to phosphorylate the proteins that form the 'matrix' that guides the deposition of the enamel minerals. The sequence is that of Pseudokinase FAM20A from Mus musculus (Mouse).